Here is a 139-residue protein sequence, read N- to C-terminus: Large ribosomal subunit protein uL16c (139 aa).

Belongs to the universal ribosomal protein uL16 family. In terms of assembly, part of the 50S ribosomal subunit.

The protein resides in the plastid. The protein localises to the chloroplast. This Cicer arietinum (Chickpea) protein is Large ribosomal subunit protein uL16c.